The primary structure comprises 258 residues: 5-oxoprolinase subunit A 2 (258 aa).

The protein belongs to the LamB/PxpA family. As to quaternary structure, forms a complex composed of PxpA, PxpB and PxpC.

It carries out the reaction 5-oxo-L-proline + ATP + 2 H2O = L-glutamate + ADP + phosphate + H(+). In terms of biological role, catalyzes the cleavage of 5-oxoproline to form L-glutamate coupled to the hydrolysis of ATP to ADP and inorganic phosphate. The polypeptide is 5-oxoprolinase subunit A 2 (Pseudomonas putida (strain ATCC 47054 / DSM 6125 / CFBP 8728 / NCIMB 11950 / KT2440)).